We begin with the raw amino-acid sequence, 96 residues long: Transcription and mRNA export factor SUS1 (96 aa).

K68 is covalently cross-linked (Glycyl lysine isopeptide (Lys-Gly) (interchain with G-Cter in ubiquitin)).

This sequence belongs to the ENY2 family. Component of the nuclear pore complex (NPC)-associated TREX-2 complex (transcription and export complex 2), composed of at least SUS1, SAC3, THP1, SEM1, and CDC31. TREX-2 contains 2 SUS1 chains. The TREX-2 complex interacts with the nucleoporin NUP1. Component of the 1.8 MDa SAGA transcription coactivator-HAT complex. SAGA is built of 5 distinct domains with specialized functions. Within the SAGA complex, SUS1, SGF11, SGF73 and UBP8 form an additional subcomplex of SAGA called the DUB module (deubiquitination module). Interacts directly with THP1, SAC3, SGF11, and with the RNA polymerase II.

It localises to the nucleus. Its subcellular location is the nucleoplasm. The protein localises to the cytoplasm. The protein resides in the P-body. Functionally, involved in mRNA export coupled transcription activation by association with both the TREX-2 and the SAGA complexes. At the promoters, SAGA is required for recruitment of the basal transcription machinery. It influences RNA polymerase II transcriptional activity through different activities such as TBP interaction and promoter selectivity, interaction with transcription activators, and chromatin modification through histone acetylation and deubiquitination. Within the SAGA complex, participates in a subcomplex required for deubiquitination of H2B and for the maintenance of steady-state H3 methylation levels. The TREX-2 complex functions in docking export-competent ribonucleoprotein particles (mRNPs) to the nuclear entrance of the nuclear pore complex (nuclear basket). TREX-2 participates in mRNA export and accurate chromatin positioning in the nucleus by tethering genes to the nuclear periphery. May also be involved in cytoplasmic mRNA decay by interaction with components of P-bodies. The chain is Transcription and mRNA export factor SUS1 from Saccharomyces cerevisiae (strain YJM789) (Baker's yeast).